A 161-amino-acid chain; its full sequence is Large ribosomal subunit protein uL16 (161 aa).

The interval 140–161 (LNKGNYKPAKTPVTADDSESSS) is disordered.

This sequence belongs to the universal ribosomal protein uL16 family. As to quaternary structure, part of the 50S ribosomal subunit.

In terms of biological role, binds 23S rRNA and is also seen to make contacts with the A and possibly P site tRNAs. The chain is Large ribosomal subunit protein uL16 from Prochlorococcus marinus (strain NATL2A).